The following is a 217-amino-acid chain: tRNA (guanine-N(7)-)-methyltransferase (217 aa).

Residues E43, D68, N101, and N123 each coordinate S-adenosyl-L-methionine. A substrate-binding site is contributed by K127. The tract at residues 129 to 134 (RHNKRR) is interaction with RNA. Substrate contacts are provided by residues D159 and 196–199 (TEYE).

The protein belongs to the class I-like SAM-binding methyltransferase superfamily. TrmB family.

It catalyses the reaction guanosine(46) in tRNA + S-adenosyl-L-methionine = N(7)-methylguanosine(46) in tRNA + S-adenosyl-L-homocysteine. Its pathway is tRNA modification; N(7)-methylguanine-tRNA biosynthesis. Catalyzes the formation of N(7)-methylguanine at position 46 (m7G46) in tRNA. The polypeptide is tRNA (guanine-N(7)-)-methyltransferase (Clostridium botulinum (strain Langeland / NCTC 10281 / Type F)).